Consider the following 70-residue polypeptide: Small ribosomal subunit protein bS21 (70 aa).

The protein belongs to the bacterial ribosomal protein bS21 family.

The chain is Small ribosomal subunit protein bS21 from Nitrosospira multiformis (strain ATCC 25196 / NCIMB 11849 / C 71).